A 585-amino-acid chain; its full sequence is Proline--tRNA ligase (585 aa).

Belongs to the class-II aminoacyl-tRNA synthetase family. ProS type 1 subfamily. In terms of assembly, homodimer.

It localises to the cytoplasm. It catalyses the reaction tRNA(Pro) + L-proline + ATP = L-prolyl-tRNA(Pro) + AMP + diphosphate. Its function is as follows. Catalyzes the attachment of proline to tRNA(Pro) in a two-step reaction: proline is first activated by ATP to form Pro-AMP and then transferred to the acceptor end of tRNA(Pro). As ProRS can inadvertently accommodate and process non-cognate amino acids such as alanine and cysteine, to avoid such errors it has two additional distinct editing activities against alanine. One activity is designated as 'pretransfer' editing and involves the tRNA(Pro)-independent hydrolysis of activated Ala-AMP. The other activity is designated 'posttransfer' editing and involves deacylation of mischarged Ala-tRNA(Pro). The misacylated Cys-tRNA(Pro) is not edited by ProRS. This is Proline--tRNA ligase from Nocardia farcinica (strain IFM 10152).